The sequence spans 142 residues: Translation initiation factor 2 subunit beta (142 aa).

This sequence belongs to the eIF-2-beta/eIF-5 family. In terms of assembly, heterotrimer composed of an alpha, a beta and a gamma chain.

Its function is as follows. eIF-2 functions in the early steps of protein synthesis by forming a ternary complex with GTP and initiator tRNA. In Thermococcus kodakarensis (strain ATCC BAA-918 / JCM 12380 / KOD1) (Pyrococcus kodakaraensis (strain KOD1)), this protein is Translation initiation factor 2 subunit beta.